The following is a 174-amino-acid chain: Large ribosomal subunit protein uL13 (174 aa).

Disordered regions lie at residues 1–22 and 153–174; these read MAFPDTDVSPPRGGPSSPAKSP and GETHPHSAQKPQVLKTQPLEVK.

It belongs to the universal ribosomal protein uL13 family. As to quaternary structure, part of the 50S ribosomal subunit. Contacts proteins L3 and L20.

Its function is as follows. This protein is one of the early assembly proteins of the 50S ribosomal subunit. Binds to the 23S rRNA. In Deinococcus radiodurans (strain ATCC 13939 / DSM 20539 / JCM 16871 / CCUG 27074 / LMG 4051 / NBRC 15346 / NCIMB 9279 / VKM B-1422 / R1), this protein is Large ribosomal subunit protein uL13 (rplM).